Consider the following 234-residue polypeptide: Leucyl/phenylalanyl-tRNA--protein transferase (234 aa).

Belongs to the L/F-transferase family.

It localises to the cytoplasm. The enzyme catalyses N-terminal L-lysyl-[protein] + L-leucyl-tRNA(Leu) = N-terminal L-leucyl-L-lysyl-[protein] + tRNA(Leu) + H(+). It catalyses the reaction N-terminal L-arginyl-[protein] + L-leucyl-tRNA(Leu) = N-terminal L-leucyl-L-arginyl-[protein] + tRNA(Leu) + H(+). It carries out the reaction L-phenylalanyl-tRNA(Phe) + an N-terminal L-alpha-aminoacyl-[protein] = an N-terminal L-phenylalanyl-L-alpha-aminoacyl-[protein] + tRNA(Phe). Functionally, functions in the N-end rule pathway of protein degradation where it conjugates Leu, Phe and, less efficiently, Met from aminoacyl-tRNAs to the N-termini of proteins containing an N-terminal arginine or lysine. The protein is Leucyl/phenylalanyl-tRNA--protein transferase of Enterobacter sp. (strain 638).